Here is a 115-residue protein sequence, read N- to C-terminus: Ribosome-binding factor A (115 aa).

Belongs to the RbfA family. In terms of assembly, monomer. Binds 30S ribosomal subunits, but not 50S ribosomal subunits or 70S ribosomes.

Its subcellular location is the cytoplasm. In terms of biological role, one of several proteins that assist in the late maturation steps of the functional core of the 30S ribosomal subunit. Associates with free 30S ribosomal subunits (but not with 30S subunits that are part of 70S ribosomes or polysomes). Required for efficient processing of 16S rRNA. May interact with the 5'-terminal helix region of 16S rRNA. This Streptococcus gordonii (strain Challis / ATCC 35105 / BCRC 15272 / CH1 / DL1 / V288) protein is Ribosome-binding factor A.